We begin with the raw amino-acid sequence, 353 residues long: Photosystem II D2 protein (353 aa).

N-acetylthreonine is present on Thr2. Phosphothreonine is present on Thr2. The chain crosses the membrane as a helical span at residues Cys41 to Thr61. His118 lines the chlorophyll a pocket. Residues Gly125–Pro141 form a helical membrane-spanning segment. Pheophytin a-binding residues include Gln130 and Asn143. A helical transmembrane segment spans residues Val153 to Ser166. His198 contacts chlorophyll a. Residues Ala208–Asp228 form a helical membrane-spanning segment. His215 and Phe262 together coordinate a plastoquinone. His215 is a Fe cation binding site. His269 is a binding site for Fe cation. The helical transmembrane segment at Gly279 to Arg295 threads the bilayer.

This sequence belongs to the reaction center PufL/M/PsbA/D family. In terms of assembly, PSII is composed of 1 copy each of membrane proteins PsbA, PsbB, PsbC, PsbD, PsbE, PsbF, PsbH, PsbI, PsbJ, PsbK, PsbL, PsbM, PsbT, PsbX, PsbY, PsbZ, Psb30/Ycf12, at least 3 peripheral proteins of the oxygen-evolving complex and a large number of cofactors. It forms dimeric complexes. The D1/D2 heterodimer binds P680, chlorophylls that are the primary electron donor of PSII, and subsequent electron acceptors. It shares a non-heme iron and each subunit binds pheophytin, quinone, additional chlorophylls, carotenoids and lipids. There is also a Cl(-1) ion associated with D1 and D2, which is required for oxygen evolution. The PSII complex binds additional chlorophylls, carotenoids and specific lipids. serves as cofactor.

It localises to the plastid. Its subcellular location is the chloroplast thylakoid membrane. The catalysed reaction is 2 a plastoquinone + 4 hnu + 2 H2O = 2 a plastoquinol + O2. Its function is as follows. Photosystem II (PSII) is a light-driven water:plastoquinone oxidoreductase that uses light energy to abstract electrons from H(2)O, generating O(2) and a proton gradient subsequently used for ATP formation. It consists of a core antenna complex that captures photons, and an electron transfer chain that converts photonic excitation into a charge separation. The D1/D2 (PsbA/PsbD) reaction center heterodimer binds P680, the primary electron donor of PSII as well as several subsequent electron acceptors. D2 is needed for assembly of a stable PSII complex. In Solanum bulbocastanum (Wild potato), this protein is Photosystem II D2 protein.